We begin with the raw amino-acid sequence, 554 residues long: Wee1-like protein kinase 2-B (554 aa).

Disordered regions lie at residues 1–86 and 145–182; these read MRMA…GGEC and TLVNVNPFTPQSYRQTHFQPNGKRKERPEDDCSSDSQM. S38 carries the post-translational modification Phosphoserine. Polar residues-rich tracts occupy residues 38 to 48 and 147 to 163; these read SPVSSWRTNNC and VNVNPFTPQSYRQTHFQ. The 275-residue stretch at 213-487 folds into the Protein kinase domain; the sequence is FLEIEKIGAG…AKNSVLRRCV (275 aa). ATP contacts are provided by residues 219–227 and K242; that span reads IGAGEFGSV. D340 (proton acceptor) is an active-site residue. N345 and D377 together coordinate Mg(2+). Positions 490–516 form a coiled coil; sequence AAELQKQLNVEKFKTAMLERELQAAKL.

Belongs to the protein kinase superfamily. Ser/Thr protein kinase family. WEE1 subfamily. Interacts with cdca3. Ubiquitinated and degraded at the onset of G2/M phase. In terms of processing, phosphorylated during M and G1 phases. Interacts with cdca3 when phosphorylated at Ser-38.

The protein localises to the nucleus. It catalyses the reaction L-tyrosyl-[protein] + ATP = O-phospho-L-tyrosyl-[protein] + ADP + H(+). Oocyte and early embryo-specific protein tyrosine kinase that phosphorylates and inhibits cdk1 and acts as a regulator of meiosis in oocytes. Required to ensure the meiotic cell cycle in oocytes by phosphorylating cdk1 at 'Tyr-15', leading to inhibit cdk1 activity and prevent meiosis. In Xenopus laevis (African clawed frog), this protein is Wee1-like protein kinase 2-B (wee2-b).